The following is a 91-amino-acid chain: MAANATTNPSQLLPLELVDKCIGSRIHIVMKSDKEIVGTLLGFDDFVNMVLEDVTEFEITPEGRRITKLDQILLNGNNITMLVPGGEGPEV.

N-acetylalanine is present on A2. The Sm domain occupies 13 to 88 (LPLELVDKCI…ITMLVPGGEG (76 aa)).

Belongs to the snRNP Sm proteins family. In terms of assembly, component of the precatalytic spliceosome (spliceosome B complex). Component of the U4/U6-U5 tri-snRNP complex, a building block of the precatalytic spliceosome (spliceosome B complex). The U4/U6-U5 tri-snRNP complex is composed of the U4, U6 and U5 snRNAs and at least PRPF3, PRPF4, PRPF6, PRPF8, PRPF31, SNRNP200, TXNL4A, SNRNP40, SNRPB, SNRPD1, SNRPD2, SNRPD3, SNRPE, SNRPF, SNRPG, DDX23, CD2BP2, PPIH, SNU13, EFTUD2, SART1 and USP39, plus LSM2, LSM3, LSM4, LSM5, LSM6, LSM7 and LSM8. LSM2, LSM3, LSM4, LSM5, LSM6, LSM7 and LSM8 form a heptameric, ring-shaped subcomplex (the LSM2-8 complex) that is part of the U4/U6-U5 tri-snRNP complex and the precatalytic spliceosome.

It localises to the nucleus. In terms of biological role, plays a role in pre-mRNA splicing as component of the U4/U6-U5 tri-snRNP complex that is involved in spliceosome assembly, and as component of the precatalytic spliceosome (spliceosome B complex). The heptameric LSM2-8 complex binds specifically to the 3'-terminal U-tract of U6 snRNA. This Bos taurus (Bovine) protein is U6 snRNA-associated Sm-like protein LSm5 (LSM5).